A 62-amino-acid polypeptide reads, in one-letter code: Photosystem II reaction center protein Z (62 aa).

The next 2 helical transmembrane spans lie at 8-28 and 41-61; these read ALIG…VAYA and WVGS…NFFV.

Belongs to the PsbZ family. In terms of assembly, PSII is composed of 1 copy each of membrane proteins PsbA, PsbB, PsbC, PsbD, PsbE, PsbF, PsbH, PsbI, PsbJ, PsbK, PsbL, PsbM, PsbT, PsbX, PsbY, PsbZ, Psb30/Ycf12, peripheral proteins PsbO, CyanoQ (PsbQ), PsbU, PsbV and a large number of cofactors. It forms dimeric complexes.

The protein resides in the cellular thylakoid membrane. May control the interaction of photosystem II (PSII) cores with the light-harvesting antenna, regulates electron flow through the 2 photosystem reaction centers. PSII is a light-driven water plastoquinone oxidoreductase, using light energy to abstract electrons from H(2)O, generating a proton gradient subsequently used for ATP formation. The protein is Photosystem II reaction center protein Z of Nostoc punctiforme (strain ATCC 29133 / PCC 73102).